The sequence spans 306 residues: NAD kinase 1 (306 aa).

Asp-67 serves as the catalytic Proton acceptor. NAD(+) is bound by residues 67-68 (DG), 149-150 (NE), and Asp-181.

It belongs to the NAD kinase family. A divalent metal cation serves as cofactor.

The protein localises to the cytoplasm. The enzyme catalyses NAD(+) + ATP = ADP + NADP(+) + H(+). In terms of biological role, involved in the regulation of the intracellular balance of NAD and NADP, and is a key enzyme in the biosynthesis of NADP. Catalyzes specifically the phosphorylation on 2'-hydroxyl of the adenosine moiety of NAD to yield NADP. The chain is NAD kinase 1 from Thermosynechococcus vestitus (strain NIES-2133 / IAM M-273 / BP-1).